We begin with the raw amino-acid sequence, 237 residues long: Phosphoribosylaminoimidazole-succinocarboxamide synthase (237 aa).

It belongs to the SAICAR synthetase family.

It catalyses the reaction 5-amino-1-(5-phospho-D-ribosyl)imidazole-4-carboxylate + L-aspartate + ATP = (2S)-2-[5-amino-1-(5-phospho-beta-D-ribosyl)imidazole-4-carboxamido]succinate + ADP + phosphate + 2 H(+). The protein operates within purine metabolism; IMP biosynthesis via de novo pathway; 5-amino-1-(5-phospho-D-ribosyl)imidazole-4-carboxamide from 5-amino-1-(5-phospho-D-ribosyl)imidazole-4-carboxylate: step 1/2. This chain is Phosphoribosylaminoimidazole-succinocarboxamide synthase, found in Listeria innocua serovar 6a (strain ATCC BAA-680 / CLIP 11262).